A 262-amino-acid polypeptide reads, in one-letter code: Shikimate dehydrogenase (NADP(+)) (262 aa).

Shikimate is bound by residues 13–15 and Thr-59; that span reads SLS. Lys-63 serves as the catalytic Proton acceptor. Asp-75 lines the NADP(+) pocket. Asn-84 and Asp-99 together coordinate shikimate. NADP(+)-binding positions include 122-126, 144-149, and Met-205; these read GAGGA and NRTLEK. Tyr-207 lines the shikimate pocket. Residue Gly-228 coordinates NADP(+).

Belongs to the shikimate dehydrogenase family. As to quaternary structure, homodimer.

The enzyme catalyses shikimate + NADP(+) = 3-dehydroshikimate + NADPH + H(+). It functions in the pathway metabolic intermediate biosynthesis; chorismate biosynthesis; chorismate from D-erythrose 4-phosphate and phosphoenolpyruvate: step 4/7. Functionally, involved in the biosynthesis of the chorismate, which leads to the biosynthesis of aromatic amino acids. Catalyzes the reversible NADPH linked reduction of 3-dehydroshikimate (DHSA) to yield shikimate (SA). This is Shikimate dehydrogenase (NADP(+)) from Ignicoccus hospitalis (strain KIN4/I / DSM 18386 / JCM 14125).